A 390-amino-acid chain; its full sequence is Monomeric sarcosine oxidase (390 aa).

Residue 6–36 (DVIVVGAGSMGMAAGYQLAKQGVKTLLVDAF) participates in FAD binding. C316 carries the post-translational modification S-8alpha-FAD cysteine.

In terms of assembly, monomer. The cofactor is FAD.

The protein localises to the cytoplasm. It catalyses the reaction sarcosine + O2 + H2O = formaldehyde + glycine + H2O2. With respect to regulation, pyrrole-2-carboxylate is a competitive inhibitor. N-(cyclopropyl)glycine (CPG) is a mechanism-based inhibitor and inactivates the enzyme by covalently modifying the flavin. Catalyzes the oxidative demethylation of sarcosine. Can also oxidize other secondary amino acids such as N-methyl-L-alanine. The chain is Monomeric sarcosine oxidase (soxA) from Bacillus sp. (strain B-0618).